The sequence spans 260 residues: ARL14 effector protein (260 aa).

Residue Met1 is modified to N-acetylmethionine. Lys177 is covalently cross-linked (Glycyl lysine isopeptide (Lys-Gly) (interchain with G-Cter in SUMO2)). Ser183 bears the Phosphoserine mark.

As to quaternary structure, interacts with ARL14 and MYO1E.

The protein localises to the cytoplasm. In terms of biological role, through its interaction with ARL14 and MYO1E, may connect MHC class II-containing cytoplasmic vesicles to the actin network and hence controls the movement of these vesicles along the actin cytoskeleton in dendritic cells. In Bos taurus (Bovine), this protein is ARL14 effector protein (ARL14EP).